A 78-amino-acid polypeptide reads, in one-letter code: Putative permease-like protein YdzE (78 aa).

3 consecutive transmembrane segments (helical) span residues 2 to 22 (YLGIVSTACAFLLWNHGLQLL), 27 to 47 (GGLFFFFQPLVGTLLGWILLG), and 49 to 69 (QIGGTFWIGSFLILSGVLLVI). In terms of domain architecture, EamA spans 2–70 (YLGIVSTACA…ILSGVLLVIK (69 aa)).

Belongs to the EamA transporter family.

Its subcellular location is the cell membrane. In Bacillus subtilis (strain 168), this protein is Putative permease-like protein YdzE (ydzE).